Consider the following 347-residue polypeptide: Lipoyl synthase (347 aa).

[4Fe-4S] cluster is bound by residues cysteine 77, cysteine 82, cysteine 88, cysteine 103, cysteine 107, cysteine 110, and serine 317. One can recognise a Radical SAM core domain in the interval 89–306 (FADGTATFMI…MDYGKKIGFF (218 aa)).

It belongs to the radical SAM superfamily. Lipoyl synthase family. Requires [4Fe-4S] cluster as cofactor.

The protein localises to the cytoplasm. It catalyses the reaction [[Fe-S] cluster scaffold protein carrying a second [4Fe-4S](2+) cluster] + N(6)-octanoyl-L-lysyl-[protein] + 2 oxidized [2Fe-2S]-[ferredoxin] + 2 S-adenosyl-L-methionine + 4 H(+) = [[Fe-S] cluster scaffold protein] + N(6)-[(R)-dihydrolipoyl]-L-lysyl-[protein] + 4 Fe(3+) + 2 hydrogen sulfide + 2 5'-deoxyadenosine + 2 L-methionine + 2 reduced [2Fe-2S]-[ferredoxin]. Its pathway is protein modification; protein lipoylation via endogenous pathway; protein N(6)-(lipoyl)lysine from octanoyl-[acyl-carrier-protein]: step 2/2. In terms of biological role, catalyzes the radical-mediated insertion of two sulfur atoms into the C-6 and C-8 positions of the octanoyl moiety bound to the lipoyl domains of lipoate-dependent enzymes, thereby converting the octanoylated domains into lipoylated derivatives. The polypeptide is Lipoyl synthase (Psychrobacter cryohalolentis (strain ATCC BAA-1226 / DSM 17306 / VKM B-2378 / K5)).